Reading from the N-terminus, the 48-residue chain is Sulfide dehydrogenase [flavocytochrome c] flavoprotein chain (48 aa).

40 to 46 provides a ligand contact to FAD; the sequence is VTCPFSN.

As to quaternary structure, dimer of one cytochrome and one flavoprotein.

The protein localises to the periplasm. The enzyme catalyses hydrogen sulfide + 2 Fe(III)-[cytochrome c] = sulfur + 2 Fe(II)-[cytochrome c] + H(+). The sequence is that of Sulfide dehydrogenase [flavocytochrome c] flavoprotein chain from Chlorobaculum thiosulfatiphilum (Chlorobium limicola f.sp. thiosulfatophilum).